The sequence spans 156 residues: Small ribosomal subunit protein uS7 (156 aa).

Belongs to the universal ribosomal protein uS7 family. As to quaternary structure, part of the 30S ribosomal subunit. Contacts proteins S9 and S11.

In terms of biological role, one of the primary rRNA binding proteins, it binds directly to 16S rRNA where it nucleates assembly of the head domain of the 30S subunit. Is located at the subunit interface close to the decoding center, probably blocks exit of the E-site tRNA. The chain is Small ribosomal subunit protein uS7 from Synechococcus sp. (strain RCC307).